Here is a 428-residue protein sequence, read N- to C-terminus: Divalent metal cation transporter MntH (428 aa).

The next 11 membrane-spanning stretches (helical) occupy residues 33-53 (WYLLGPAFVAAIAYVDPGNVA), 60-80 (AQFGYLLLWVIVAANVMAALV), 114-134 (QAEIVAMATDVAEVIGGAIAL), 136-156 (IMFNLPLPIGGIITGVVSLLL), 171-191 (VITALLLVIAIGFTASFFVVT), 210-230 (SVLLAAAIMGATVMPHAVYLH), 258-278 (VGLAMLIAGGVNAAMLLVAAL), 299-319 (TLGATIAVLFAVGLLASGLAS), 334-356 (LLHWSVPMLVRRLITLGPALAIL), 365-385 (TLVLSQVVLSFGIPFAVLPLV), and 406-426 (VGWVVAVMVSLLNVMLIYLTV).

Belongs to the NRAMP family.

It is found in the cell membrane. Functionally, h(+)-stimulated, divalent metal cation uptake system. Transports zinc and iron. Can also interact with manganese and copper. The chain is Divalent metal cation transporter MntH from Mycobacterium tuberculosis (strain CDC 1551 / Oshkosh).